An 80-amino-acid chain; its full sequence is UPF0125 protein PD_1376 (80 aa).

Belongs to the UPF0125 (RnfH) family.

This chain is UPF0125 protein PD_1376, found in Xylella fastidiosa (strain Temecula1 / ATCC 700964).